A 404-amino-acid chain; its full sequence is 8-amino-7-oxononanoate synthase (404 aa).

Residue Arg20 participates in substrate binding. Gly116 to Tyr117 lines the pyridoxal 5'-phosphate pocket. His141 is a substrate binding site. Residues Ser187, His215, and Thr243 each contribute to the pyridoxal 5'-phosphate site. Lys246 carries the N6-(pyridoxal phosphate)lysine modification. Thr366 lines the substrate pocket.

This sequence belongs to the class-II pyridoxal-phosphate-dependent aminotransferase family. BioF subfamily. As to quaternary structure, homodimer. It depends on pyridoxal 5'-phosphate as a cofactor.

It carries out the reaction 6-carboxyhexanoyl-[ACP] + L-alanine + H(+) = (8S)-8-amino-7-oxononanoate + holo-[ACP] + CO2. It participates in cofactor biosynthesis; biotin biosynthesis. Functionally, catalyzes the decarboxylative condensation of pimeloyl-[acyl-carrier protein] and L-alanine to produce 8-amino-7-oxononanoate (AON), [acyl-carrier protein], and carbon dioxide. This chain is 8-amino-7-oxononanoate synthase, found in Cupriavidus taiwanensis (strain DSM 17343 / BCRC 17206 / CCUG 44338 / CIP 107171 / LMG 19424 / R1) (Ralstonia taiwanensis (strain LMG 19424)).